Consider the following 132-residue polypeptide: 3'-dehydrocarminate deglycosidase beta subunit (132 aa).

The protein belongs to the C-glycoside deglycosidase beta subunit family. Heterodimer composed of an alpha subunit (CarB) and a beta subunit (CarC). It depends on Mg(2+) as a cofactor.

It carries out the reaction 3'-dehydrocarminate + H(+) = kermesate + 1,5-anhydro-D-erythro-hex-1-en-3-ulose. Its activity is regulated as follows. Activity is strongly reduced in the presence of chelating agents. Its function is as follows. Carbon-carbon bond-cleaving enzyme which participates in a carminate degradation pathway. Cleaves the C-C bond in 3'-dehydrocarminate to form kermesate. Also shows weak activity with other C-glycosides, such as 3''-dehydropuerarin (3''-oxo-puerarin), 3''-dehydroisoorientin (3''-oxo-homoorientin) and 3'-dehydromangiferin (3'-oxo-mangiferin). The protein is 3'-dehydrocarminate deglycosidase beta subunit of Microbacterium sp.